The sequence spans 185 residues: Ribosome-recycling factor (185 aa).

It belongs to the RRF family.

Its subcellular location is the cytoplasm. In terms of biological role, responsible for the release of ribosomes from messenger RNA at the termination of protein biosynthesis. May increase the efficiency of translation by recycling ribosomes from one round of translation to another. The polypeptide is Ribosome-recycling factor (Chloroflexus aurantiacus (strain ATCC 29364 / DSM 637 / Y-400-fl)).